We begin with the raw amino-acid sequence, 370 residues long: Quinolinate synthase (370 aa).

Iminosuccinate contacts are provided by His62 and Ser83. Cys128 is a [4Fe-4S] cluster binding site. Residues 154-156 and Ser171 each bind iminosuccinate; that span reads YAN. Cys215 serves as a coordination point for [4Fe-4S] cluster. Iminosuccinate is bound by residues 241–243 and Thr258; that span reads HPE. Cys312 contacts [4Fe-4S] cluster.

This sequence belongs to the quinolinate synthase family. Type 1 subfamily. It depends on [4Fe-4S] cluster as a cofactor.

The protein localises to the cytoplasm. The catalysed reaction is iminosuccinate + dihydroxyacetone phosphate = quinolinate + phosphate + 2 H2O + H(+). The protein operates within cofactor biosynthesis; NAD(+) biosynthesis; quinolinate from iminoaspartate: step 1/1. In terms of biological role, catalyzes the condensation of iminoaspartate with dihydroxyacetone phosphate to form quinolinate. The sequence is that of Quinolinate synthase from Neisseria gonorrhoeae (strain ATCC 700825 / FA 1090).